The chain runs to 215 residues: ATP-dependent dethiobiotin synthetase BioD (215 aa).

13–18 provides a ligand contact to ATP; that stretch reads DIGKTV. T17 contributes to the Mg(2+) binding site. Residue K38 is part of the active site. T42 is a binding site for substrate. ATP-binding positions include D50, 115 to 118, and 175 to 176; these read EGAG and NH. Residues D50 and E115 each contribute to the Mg(2+) site.

It belongs to the dethiobiotin synthetase family. In terms of assembly, homodimer. Mg(2+) is required as a cofactor.

It is found in the cytoplasm. It catalyses the reaction (7R,8S)-7,8-diammoniononanoate + CO2 + ATP = (4R,5S)-dethiobiotin + ADP + phosphate + 3 H(+). The protein operates within cofactor biosynthesis; biotin biosynthesis; biotin from 7,8-diaminononanoate: step 1/2. Catalyzes a mechanistically unusual reaction, the ATP-dependent insertion of CO2 between the N7 and N8 nitrogen atoms of 7,8-diaminopelargonic acid (DAPA, also called 7,8-diammoniononanoate) to form a ureido ring. The polypeptide is ATP-dependent dethiobiotin synthetase BioD (Neisseria meningitidis serogroup C / serotype 2a (strain ATCC 700532 / DSM 15464 / FAM18)).